The following is a 1012-amino-acid chain: MSLPKTPSTPLNSTSTSESKKLKVSVAKEGTRGLPELKEKKNMVDRSKLLPTSLQNEFIPKEVLLSLTYAANAGPCPENLLPPKKIKTPKGTLPRLVDHVWHHPVRRNKFKYLIDHPVSLTGAGRDISFLYDVTYAKGQTREKAVCPPHLARSLQSHDGVIVPHKPKTLTDTLIPEEFHIVSSTGVSGLECYDDKYTTLLTDSENRLLLFPSMKPNKRVEVAQLNDVMDTMLERAGVENQEYTGPTKMHKLLHILKKEQTIYNMIFHELIRQVSVDCADRGELLSKVRERYVQMLDQIARQMIDFYKDLVTQRVMDQRILEELYNFKHVIEELTRELCLVRAHDVKLTKETEKAHKDLAQALLNAEKNAKIVEEYHDLYTLQRERMENDMKKLVAERDIWSSATYELALKVIERNRVILARRLYLNEKGWNKYTKHFIILLSNKDTEDLALLQKLTQKWRNLVNKLKQEVEQMEESTSETLKIVKDGLIKWQEFFNEKDILSPNKGNIFNSVLLDFKQWQKILNEKKEEFTGDVLLSKYDTLKIIKHLQENWADIGLGIFNRHKSLEGEMPSERQYMEEIIKNIQKLYKEYEIRINGDNGYSKILPSLISSLDFCSFKLENLEFPDTPLEEWQEIDEKINEMKSHLDILLNLTGIVPQHIDVDSVSVLQAYIFNMIQQWLLKIGNEINNGNIELQHHMDELHISMIQWMVNLLILMIPNFTDQDCLLKLEEESAEKHDIGVARLELDAIELTRKLYQYSSYLSSCCKGMVTAMALSKSTNSHKNATEDLYEVDKLKKECYEWINTCSCLLSNIKGRKITLLTYEEIERLLEEEAVKEFIEPEIDESFKEDEEESKEDRKLQEENKERAEEQPSTSTEKEKLIRFIGEDENVHSKPLFETDVLSSWRESAKQGTLAQKYLEAMAVIEHMQEKLLEVENRARQAEEKFEDAYEKLHHTLIKNKDLEELVMTSRKESKEEKENQDEREVKEEEEQQEEEEVRSAENSSKSPKKGH.

Over residues 1–17 (MSLPKTPSTPLNSTSTS) the composition is skewed to low complexity. Residues 1 to 34 (MSLPKTPSTPLNSTSTSESKKLKVSVAKEGTRGL) form a disordered region. Coiled-coil stretches lie at residues 317–402 (QRIL…IWSS), 447–486 (EDLA…IVKD), and 572–597 (SERQ…RING). The span at 841–854 (PEIDESFKEDEEES) shows a compositional bias: acidic residues. Disordered regions lie at residues 841 to 879 (PEID…TEKE) and 963 to 1012 (LEEL…KKGH). Basic and acidic residues-rich tracts occupy residues 855 to 879 (KEDR…TEKE) and 963 to 987 (LEEL…REVK). Over residues 988 to 997 (EEEEQQEEEE) the composition is skewed to acidic residues.

In terms of tissue distribution, highly expressed in testis. Highly expressed in the round and late spermatids.

The protein resides in the cytoplasm. Its function is as follows. May be essential for spermiogenesis and male fertility probably by regulating the manchette dynamics, spermatid head shaping and sperm flagellum assembly. This chain is Axonemal dynein light chain domain-containing protein 1, found in Homo sapiens (Human).